The following is a 165-amino-acid chain: Chorismate pyruvate-lyase (165 aa).

Residues Met35, Arg77, Leu115, and Glu156 each contribute to the substrate site.

Belongs to the UbiC family. Monomer.

The protein localises to the cytoplasm. It catalyses the reaction chorismate = 4-hydroxybenzoate + pyruvate. Its pathway is cofactor biosynthesis; ubiquinone biosynthesis. In terms of biological role, removes the pyruvyl group from chorismate, with concomitant aromatization of the ring, to provide 4-hydroxybenzoate (4HB) for the ubiquinone pathway. This Escherichia coli O157:H7 protein is Chorismate pyruvate-lyase.